Here is a 4885-residue protein sequence, read N- to C-terminus: Centrosome-associated protein CEP530 (4885 aa).

A coiled-coil region spans residues V1437–E1528.

The protein resides in the cytoplasm. The protein localises to the cytoskeleton. Its subcellular location is the microtubule organizing center. It localises to the centrosome. Functionally, required for proper nuclei segregation during the cell division. Plays a role in coordination of karyokinesis and cytokinesis during the tachyzoite cell cycle. This is Centrosome-associated protein CEP530 from Toxoplasma gondii (strain ATCC 50611 / Me49).